The sequence spans 331 residues: Tetraspanin-10 (331 aa).

The segment at 1-34 (MKEEECSPLLSQDTAGREHPLTRNSPPTANIPCP) is disordered. Residues 1-76 (MKEEECSPLL…LSTGSNCVKY (76 aa)) lie on the Cytoplasmic side of the membrane. A helical membrane pass occupies residues 77–97 (LIFLSNFLFSLPSLLALAAGL). The Extracellular portion of the chain corresponds to 98-120 (WGLTVKRSQGIGWGGPVPTDPML). Residues 121–141 (MLVLGGLVVSVVSLSGCLGAF) traverse the membrane as a helical segment. The Cytoplasmic portion of the chain corresponds to 142–152 (CENSCLLHWYC). The helical transmembrane segment at 153–173 (GAVLFCLALEALAGVLMVTLW) threads the bilayer. Topologically, residues 174–331 (KPLQDSLKYT…AAEDIEAGPL (158 aa)) are extracellular. 4 cysteine pairs are disulfide-bonded: Cys-210/Cys-277, Cys-211/Cys-241, Cys-227/Cys-235, and Cys-242/Cys-256. Residue Asn-226 is glycosylated (N-linked (GlcNAc...) asparagine).

The protein belongs to the tetraspanin (TM4SF) family. In terms of assembly, interacts with ADAM10.

The protein resides in the cell membrane. Its function is as follows. Part of TspanC8 subgroup, composed of 6 members that interact with the transmembrane metalloprotease ADAM10. This interaction is required for ADAM10 exit from the endoplasmic reticulum and for enzymatic maturation and trafficking to the cell surface as well as substrate specificity. Different TspanC8/ADAM10 complexes have distinct substrates. The chain is Tetraspanin-10 (Tspan10) from Mus musculus (Mouse).